A 145-amino-acid polypeptide reads, in one-letter code: Peptide methionine sulfoxide reductase MsrB (145 aa).

One can recognise a MsrB domain in the interval 4–127; it reads KEELRQRIGD…NSAALKFIPY (124 aa). Cys116 (nucleophile) is an active-site residue.

It belongs to the MsrB Met sulfoxide reductase family.

The enzyme catalyses L-methionyl-[protein] + [thioredoxin]-disulfide + H2O = L-methionyl-(R)-S-oxide-[protein] + [thioredoxin]-dithiol. This chain is Peptide methionine sulfoxide reductase MsrB, found in Streptococcus equi subsp. zooepidemicus (strain H70).